Here is a 473-residue protein sequence, read N- to C-terminus: UDP-glycosyltransferase 91D2 (473 aa).

His26 acts as the Proton acceptor in catalysis. His26 is an an anthocyanidin binding site. The active-site Charge relay is the Asp121. 5 residues coordinate UDP-alpha-D-glucose: Ala344, Gln346, His361, Ser366, and Glu369. Residue Gly384 participates in an anthocyanidin binding. UDP-alpha-D-glucose is bound by residues Asp385 and Gln386.

Belongs to the UDP-glycosyltransferase family.

The catalysed reaction is steviolmonoside + UDP-alpha-D-glucose = steviolbioside + UDP + H(+). It catalyses the reaction rubusoside + UDP-alpha-D-glucose = stevioside + UDP + H(+). It carries out the reaction stevioside + UDP-alpha-D-glucose = rebaudioside E + UDP + H(+). The enzyme catalyses rebaudioside A + UDP-alpha-D-glucose = rebaudioside D + UDP + H(+). Its function is as follows. Involved in the biosynthesis of steviol glycosides in leaves. Converts the mono-glycoside steviolmonoside to the bi-glycoside steviolbioside. Converts the bi-glycoside rubusoside to the tri-glycoside stevioside. Converts the tri-glycoside stevioside to the tetra-glycoside rebaudioside E. Converts the tetra-glycoside rebaudioside A to the penta-glycoside rebaudioside E. The sequence is that of UDP-glycosyltransferase 91D2 from Stevia rebaudiana (Stevia).